An 888-amino-acid polypeptide reads, in one-letter code: Mitogen-activated protein kinase kinase kinase 12 (888 aa).

The span at 26–42 (MRKLDPDTSDCTPEKDL) shows a compositional bias: basic and acidic residues. Residues 26–104 (MRKLDPDTSD…TGSPESRASR (79 aa)) are disordered. A phosphothreonine mark is found at threonine 37 and threonine 43. Residues 64 to 75 (SPSPGGEPPPEP) are compositionally biased toward pro residues. One can recognise a Protein kinase domain in the interval 158-399 (ILDLQWVGSG…FRQILLHLDI (242 aa)). Residues 164–172 (VGSGAQGAV) and lysine 185 each bind ATP. The active-site Proton acceptor is the aspartate 269. Leucine-zipper regions lie at residues 423-444 (VKLHFEKIKSEGTCLHRLEEEL) and 476-497 (LNALMLQLELKERELLRREQAL). The segment at 557–620 (GVGLPGCPKA…GGLGVGPTAW (64 aa)) is disordered. The span at 572 to 584 (RSRRGKTRHRKAS) shows a compositional bias: basic residues. Over residues 605–615 (GGLGSPGGLGV) the composition is skewed to gly residues. Serine 640 carries the post-translational modification Phosphoserine. Disordered stretches follow at residues 654-731 (RGRG…YQHL) and 743-888 (TRSQ…SLPP). Over residues 704 to 725 (PGEGVGLLGTGREGTTGRGGSR) the composition is skewed to gly residues. Positions 752-763 (SEEEEGEVDSEV) are enriched in acidic residues. Polar residues-rich tracts occupy residues 776-789 (NMRQSLSTFSSENP) and 798-812 (SEPSPSGTPEVGSTN). Over residues 813–823 (TDERPDERSDD) the composition is skewed to basic and acidic residues.

This sequence belongs to the protein kinase superfamily. STE Ser/Thr protein kinase family. MAP kinase kinase kinase subfamily. In terms of assembly, homodimer. Interacts with MBIP. Mg(2+) is required as a cofactor. Autophosphorylated on Ser/Thr. Phosphorylated in cytosol under basal conditions and dephosphorylated when membrane-associated. Post-translationally, the activity of MAP3K12 can be regulated through its proteasomal degradation. APOE, through a receptor-mediated mechanism, activates MAP3K12 by preventing its proteasomal degradation.

It is found in the cytoplasm. It localises to the cell membrane. It catalyses the reaction L-seryl-[protein] + ATP = O-phospho-L-seryl-[protein] + ADP + H(+). The catalysed reaction is L-threonyl-[protein] + ATP = O-phospho-L-threonyl-[protein] + ADP + H(+). Functionally, part of a non-canonical MAPK signaling pathway. Activated by APOE, enhances the AP-1-mediated transcription of APP, via a MAP kinase signal transduction pathway composed of MAP2K7 and MAPK1/ERK2 and MAPK3/ERK1. May be an activator of the JNK/SAPK pathway. The chain is Mitogen-activated protein kinase kinase kinase 12 (Map3k12) from Rattus norvegicus (Rat).